A 599-amino-acid polypeptide reads, in one-letter code: Calcium-dependent protein kinase 10 (599 aa).

A lipid anchor (N-myristoyl glycine) is attached at G2. The segment at 27-110 (RQDGDDALPG…PRPRVPPVKR (84 aa)) is disordered. Over residues 74-84 (VSTTDTASAEQ) the composition is skewed to polar residues. Over residues 87 to 98 (SKSSAGSDSGEA) the composition is skewed to low complexity. A Protein kinase domain is found at 133–391 (YSLGRKLGQG…AHEVLRHPWV (259 aa)). Residues 139 to 147 (LGQGQFGTT) and K162 each bind ATP. D257 (proton acceptor) is an active-site residue. The autoinhibitory domain stretch occupies residues 397–427 (APDKPLDSAVLSRMKQFSAMNKLKKMALRVI). EF-hand domains follow at residues 434–469 (DEIA…VGAN), 470–505 (LQES…MNKI), 506–541 (ERED…FGLG), and 544–575 (QLEE…PTMG). Ca(2+) is bound by residues D447, D449, S451, Q453, E458, D483, D485, S487, T489, E494, D519, D521, S523, Y525, E530, D553, D555, D557, R559, and E564.

The protein belongs to the protein kinase superfamily. Ser/Thr protein kinase family. CDPK subfamily. In terms of tissue distribution, expressed in roots.

The protein localises to the membrane. The catalysed reaction is L-seryl-[protein] + ATP = O-phospho-L-seryl-[protein] + ADP + H(+). It carries out the reaction L-threonyl-[protein] + ATP = O-phospho-L-threonyl-[protein] + ADP + H(+). Its activity is regulated as follows. Activated by calcium. Autophosphorylation may play an important role in the regulation of the kinase activity. Functionally, may play a role in signal transduction pathways that involve calcium as a second messenger. The polypeptide is Calcium-dependent protein kinase 10 (Oryza sativa subsp. japonica (Rice)).